The sequence spans 701 residues: Polyribonucleotide nucleotidyltransferase (701 aa).

Mg(2+) contacts are provided by D487 and D493. The KH domain maps to 553–612 (PRLYTLRINPDKIRDVIGKGGSVIRALTEETGTSIDIAEDGLITIASVSAEGAEEAKRRI). An S1 motif domain is found at 622–692 (GKIYEGTVVK…ERGRIRLSIK (71 aa)).

This sequence belongs to the polyribonucleotide nucleotidyltransferase family. It depends on Mg(2+) as a cofactor.

It localises to the cytoplasm. The enzyme catalyses RNA(n+1) + phosphate = RNA(n) + a ribonucleoside 5'-diphosphate. Involved in mRNA degradation. Catalyzes the phosphorolysis of single-stranded polyribonucleotides processively in the 3'- to 5'-direction. The polypeptide is Polyribonucleotide nucleotidyltransferase (Laribacter hongkongensis (strain HLHK9)).